The sequence spans 427 residues: Glutamate-1-semialdehyde 2,1-aminomutase (427 aa).

K265 carries the post-translational modification N6-(pyridoxal phosphate)lysine.

This sequence belongs to the class-III pyridoxal-phosphate-dependent aminotransferase family. HemL subfamily. Homodimer. Pyridoxal 5'-phosphate serves as cofactor.

The protein localises to the cytoplasm. It catalyses the reaction (S)-4-amino-5-oxopentanoate = 5-aminolevulinate. Its pathway is porphyrin-containing compound metabolism; protoporphyrin-IX biosynthesis; 5-aminolevulinate from L-glutamyl-tRNA(Glu): step 2/2. This is Glutamate-1-semialdehyde 2,1-aminomutase from Shewanella amazonensis (strain ATCC BAA-1098 / SB2B).